Reading from the N-terminus, the 684-residue chain is Cleavage and polyadenylation specificity factor subunit 3 (684 aa).

Ser-2 is modified (N-acetylserine). His-71, His-73, Asp-75, His-76, His-158, and Asp-179 together coordinate Zn(2+). The Proton donor role is filled by His-396. Zn(2+) is bound at residue His-418. Residues Lys-462, Lys-465, and Lys-545 each participate in a glycyl lysine isopeptide (Lys-Gly) (interchain with G-Cter in SUMO) cross-link. Position 659 is a phosphoserine (Ser-659). Position 681 is a phosphothreonine (Thr-681).

Belongs to the metallo-beta-lactamase superfamily. RNA-metabolizing metallo-beta-lactamase-like family. CPSF3 subfamily. In terms of assembly, component of the cleavage and polyadenylation specificity factor (CPSF) complex, composed of CPSF1, CPSF2, CPSF3, CPSF4 and FIP1L1. Interacts with CPSF2, CSTF2 and SYMPK. Interacts with TUT1; the interaction is direct and mediates the recruitment of the CPSF complex on the 3'UTR of pre-mRNAs. Interacts with WDR33. Interacts with ZC3H3. It depends on Zn(2+) as a cofactor. Sumoylated on Lys-462, Lys-465 and Lys-545, preferentially by SUMO3.

Its subcellular location is the nucleus. Component of the cleavage and polyadenylation specificity factor (CPSF) complex that plays a key role in pre-mRNA 3'-end formation, recognizing the AAUAAA signal sequence and interacting with poly(A) polymerase and other factors to bring about cleavage and poly(A) addition. Has endonuclease activity, and functions as an mRNA 3'-end-processing endonuclease. Also involved in the histone 3'-end pre-mRNA processing. U7 snRNP-dependent protein that induces both the 3'-endoribonucleolytic cleavage of histone pre-mRNAs and acts as a 5' to 3' exonuclease for degrading the subsequent downstream cleavage product (DCP) of mature histone mRNAs. Cleavage occurs after the 5'-ACCCA-3' sequence in the histone pre-mRNA leaving a 3'hydroxyl group on the upstream fragment containing the stem loop (SL) and 5' phosphate on the downstream cleavage product (DCP) starting with CU nucleotides. The U7-dependent 5' to 3' exonuclease activity is processive and degrades the DCP RNA substrate even after complete removal of the U7-binding site. Binds to the downstream cleavage product (DCP) of histone pre-mRNAs and the cleaved DCP RNA substrate in a U7 snRNP dependent manner. Required for entering/progressing through S-phase of the cell cycle. Required for the selective processing of microRNAs (miRNAs) during embryonic stem cell differentiation via its interaction with ISY1. Required for the biogenesis of all miRNAs from the pri-miR-17-92 primary transcript except miR-92a. Only required for the biogenesis of miR-290 and miR-96 from the pri-miR-290-295 and pri-miR-96-183 primary transcripts, respectively. The sequence is that of Cleavage and polyadenylation specificity factor subunit 3 (CPSF3) from Homo sapiens (Human).